The chain runs to 440 residues: Damage-control phosphatase ARMT1 (440 aa).

Mn(2+) is bound by residues D252 and N253. 252 to 253 (DN) provides a ligand contact to substrate. Residues E257 and D290 each coordinate S-adenosyl-L-methionine. D290 serves as a coordination point for Mn(2+). Substrate is bound by residues 366-370 (DLNYR) and K403. The short motif at 400 to 403 (RTLK) is the Subfamily III RTxK motif element.

It belongs to the damage-control phosphatase family. Sugar phosphate phosphatase III subfamily. Mn(2+) serves as cofactor. It depends on Ni(2+) as a cofactor. Automethylated.

The catalysed reaction is beta-D-fructose 1-phosphate + H2O = D-fructose + phosphate. The enzyme catalyses beta-D-fructose 6-phosphate = dihydroxyacetone + D-glyceraldehyde 3-phosphate. It catalyses the reaction L-glutamyl-[protein] + S-adenosyl-L-methionine = [protein]-L-glutamate 5-O-methyl ester + S-adenosyl-L-homocysteine. Metal-dependent phosphatase that shows phosphatase activity against several substrates, including fructose-1-phosphate and fructose-6-phosphate. Its preference for fructose-1-phosphate, a strong glycating agent that causes DNA damage rather than a canonical yeast metabolite, suggests a damage-control function in hexose phosphate metabolism. Has also been shown to have O-methyltransferase activity that methylates glutamate residues of target proteins to form gamma-glutamyl methyl ester residues. Possibly methylates PCNA, suggesting it is involved in the DNA damage response. The polypeptide is Damage-control phosphatase ARMT1 (Xenopus laevis (African clawed frog)).